Reading from the N-terminus, the 591-residue chain is Alternative cytochrome c oxidase subunit 1 (591 aa).

The helical transmembrane segment at 40 to 60 (VIAIQYSLTASAIGLVALVLS) threads the bilayer. His-88 provides a ligand contact to heme b. The next 11 membrane-spanning stretches (helical) occupy residues 90–110 (MIMV…NYLI), 126–146 (MLSY…FFVP), 172–192 (GIVL…MGGL), 215–235 (VWGI…LFVG), 274–294 (LFWF…FGIV), 313–333 (VWAI…HMYV), 337–357 (YPYF…PTAI), 377–397 (MLFA…GLFL), 412–432 (VVAH…LGAI), 453–473 (FWVT…LGLL), and 498–518 (FITV…FNLV). 4 residues coordinate Cu cation: His-280, Tyr-284, His-329, and His-330. Residues 280 to 284 (HPEVY) constitute a cross-link (1'-histidyl-3'-tyrosine (His-Tyr)). Residues His-415 and His-417 each coordinate heme b.

The protein belongs to the heme-copper respiratory oxidase family. In terms of assembly, this alternate cytochrome c oxidase consists of a subunit I and two cytochromes c. Equivalents to subunit 2 and 3 are not present in this complex.

The protein resides in the cell membrane. The catalysed reaction is 4 Fe(II)-[cytochrome c] + O2 + 8 H(+)(in) = 4 Fe(III)-[cytochrome c] + 2 H2O + 4 H(+)(out). Functionally, cytochrome c oxidase is the component of the respiratory chain that catalyzes the reduction of oxygen to water. Subunits 1-3 form the functional core of the enzyme complex. Co I is the catalytic subunit of the enzyme. Electrons originating in cytochrome c are transferred via the copper A center of subunit 2 and a low-spin heme of subunit 1 to the bimetallic center formed by a high-spin heme and copper B. The sequence is that of Alternative cytochrome c oxidase subunit 1 (coxN) from Bradyrhizobium diazoefficiens (strain JCM 10833 / BCRC 13528 / IAM 13628 / NBRC 14792 / USDA 110).